The primary structure comprises 56 residues: Small ribosomal subunit protein uS14 (56 aa).

Zn(2+) is bound by residues cysteine 21, cysteine 24, cysteine 39, and cysteine 42.

The protein belongs to the universal ribosomal protein uS14 family. Zinc-binding uS14 subfamily. As to quaternary structure, part of the 30S ribosomal subunit. Requires Zn(2+) as cofactor.

In terms of biological role, binds 16S rRNA, required for the assembly of 30S particles. The chain is Small ribosomal subunit protein uS14 from Pyrococcus furiosus (strain ATCC 43587 / DSM 3638 / JCM 8422 / Vc1).